The chain runs to 243 residues: Probable HTH-type transcriptional regulator GfsR (243 aa).

Positions 154 to 179 (AAVARPDTSGSATGRTGDSSPSLALS) are disordered. The segment covering 161–178 (TSGSATGRTGDSSPSLAL) has biased composition (polar residues). An HTH luxR-type domain is found at 171-236 (DSSPSLALSP…QALLRWLGHP (66 aa)). A DNA-binding region (H-T-H motif) is located at residues 195-214 (VREIAVEMRLAEKTVRNYLS).

Its pathway is antibiotic biosynthesis. In terms of biological role, probable DNA-binding protein that contributes to the control of expression of the biosynthesis operon of the 16-membered macrolide antibiotics FD-891 and FD-892. Might be a member of a two-component regulatory system; the putative sensor kinase gene is unknown. The polypeptide is Probable HTH-type transcriptional regulator GfsR (Streptomyces halstedii).